Consider the following 1684-residue polypeptide: GRIP and coiled-coil domain-containing protein 2 (1684 aa).

Position 1 is an N-acetylmethionine (Met1). Positions 1-22 (MEDLVQDGVASPATPGTGKSKL) are disordered. At Ser11 the chain carries Phosphoserine. At Thr14 the chain carries Phosphothreonine. Residues 110–1618 (VTKMGDAHKE…REKSAANLEY (1509 aa)) are a coiled coil. Phosphoserine is present on residues Ser236, Ser1483, and Ser1487. Residues 1475-1502 (LKNEPTTRSPVSSQQSLKNLRERRNTDL) form a disordered region. The span at 1477–1492 (NEPTTRSPVSSQQSLK) shows a compositional bias: polar residues. Residues 1574–1613 (HLNGLLRETEATNAILMEQIKLLKSEIRRLERNQEREKSA) form a mediates interaction with RAB6A region. The mediates interaction with RAB9A stretch occupies residues 1574-1684 (HLNGLLRETE…SYLHSWSGLR (111 aa)). Positions 1609-1659 (REKSAANLEYLKNVLLQFIFLKPGSERERLLPVINTMLQLSPEEKGKLAAV) constitute a GRIP domain.

In terms of assembly, homodimer. Interacts (via GRIP domain) with RAB6A (preferentially in its GTP-bound form). May interact (RAB6A-dependent) with ARL1; according to PubMed:19703403, RAB6A and ARL1 are not involved in GCC2 Golgi localization as proposed by PubMed:18243103. Interacts (probably via GRIP domain) with RAB9A (preferentially in its GTP-bound form). Interacts with CLASP1 and CLASP2; recruits both proteins to membranes of the TGN. Interacts with STX16. In terms of tissue distribution, ubiquitous.

It localises to the cytoplasm. The protein localises to the golgi apparatus. The protein resides in the trans-Golgi network membrane. In terms of biological role, golgin which probably tethers transport vesicles to the trans-Golgi network (TGN) and regulates vesicular transport between the endosomes and the Golgi. As a RAB9A effector it is involved in recycling of the mannose 6-phosphate receptor from the late endosomes to the TGN. May also play a role in transport between the recycling endosomes and the Golgi. Required for maintenance of the Golgi structure, it is involved in the biogenesis of noncentrosomal, Golgi-associated microtubules through recruitment of CLASP1 and CLASP2. This Homo sapiens (Human) protein is GRIP and coiled-coil domain-containing protein 2 (GCC2).